The primary structure comprises 406 residues: Tyrosine--tRNA ligase (406 aa).

Positions 51 to 60 (PTAPDLHLGH) match the 'HIGH' region motif. The short motif at 236–240 (KMSKS) is the 'KMSKS' region element. Lys239 contacts ATP. Positions 345 to 405 (IWICKAMVEG…GKRKFLRLIV (61 aa)) constitute an S4 RNA-binding domain.

It belongs to the class-I aminoacyl-tRNA synthetase family. TyrS type 2 subfamily. In terms of assembly, homodimer.

It is found in the cytoplasm. The catalysed reaction is tRNA(Tyr) + L-tyrosine + ATP = L-tyrosyl-tRNA(Tyr) + AMP + diphosphate + H(+). In terms of biological role, catalyzes the attachment of tyrosine to tRNA(Tyr) in a two-step reaction: tyrosine is first activated by ATP to form Tyr-AMP and then transferred to the acceptor end of tRNA(Tyr). The chain is Tyrosine--tRNA ligase from Wolinella succinogenes (strain ATCC 29543 / DSM 1740 / CCUG 13145 / JCM 31913 / LMG 7466 / NCTC 11488 / FDC 602W) (Vibrio succinogenes).